Consider the following 429-residue polypeptide: Adenylosuccinate synthetase (429 aa).

GTP is bound by residues 12–18 (GDEGKGK) and 40–42 (GHT). Catalysis depends on D13, which acts as the Proton acceptor. D13 and G40 together coordinate Mg(2+). IMP contacts are provided by residues 13 to 16 (DEGK), 38 to 41 (NAGH), T128, R142, Q223, T238, and R302. H41 (proton donor) is an active-site residue. Residue 298-304 (TVTGRPR) participates in substrate binding. GTP contacts are provided by residues R304, 330–332 (LLD), and 412–414 (SVG).

Belongs to the adenylosuccinate synthetase family. In terms of assembly, homodimer. Requires Mg(2+) as cofactor.

It localises to the cytoplasm. It catalyses the reaction IMP + L-aspartate + GTP = N(6)-(1,2-dicarboxyethyl)-AMP + GDP + phosphate + 2 H(+). The protein operates within purine metabolism; AMP biosynthesis via de novo pathway; AMP from IMP: step 1/2. Functionally, plays an important role in the de novo pathway of purine nucleotide biosynthesis. Catalyzes the first committed step in the biosynthesis of AMP from IMP. This is Adenylosuccinate synthetase from Lactobacillus acidophilus (strain ATCC 700396 / NCK56 / N2 / NCFM).